The sequence spans 89 residues: Small ribosomal subunit protein bS16 (89 aa).

It belongs to the bacterial ribosomal protein bS16 family.

This chain is Small ribosomal subunit protein bS16, found in Geobacillus stearothermophilus (Bacillus stearothermophilus).